The following is a 763-amino-acid chain: Glycerophosphodiester phosphodiesterase GDPDL1 (763 aa).

The first 35 residues, 1–35 (MNSRPSNPTKLVIRSSTLLFCGVVLIHLFAAQIDA), serve as a signal peptide directing secretion. The Extracellular segment spans residues 36–744 (QRSTSRWQTL…STIAQAPSGQ (709 aa)). In terms of domain architecture, GP-PDE 1 spans 50 to 350 (PLVIARGGFS…DFPITASAAV (301 aa)). Residues Asn105, Asn192, Asn248, Asn257, Asn315, Asn359, Asn430, Asn534, Asn547, and Asn654 are each glycosylated (N-linked (GlcNAc...) asparagine). One can recognise a GP-PDE 2 domain in the interval 366–668 (FLVISKDGAS…EFPFTAARYK (303 aa)). A helical transmembrane segment spans residues 745–762 (TRLKLSLLLSVFFLSLLL). Residue Leu763 is a topological domain, cytoplasmic.

The protein belongs to the glycerophosphoryl diester phosphodiesterase family. The cofactor is Ca(2+). As to expression, expressed in rosette and cauline leaves, stems, flowers and siliques.

It is found in the cell membrane. The catalysed reaction is a sn-glycero-3-phosphodiester + H2O = an alcohol + sn-glycerol 3-phosphate + H(+). Its function is as follows. Hydrolyzes glycerolphosphoglycerol, glycerophosphocholine and glycerophosphoethanolamine in vitro. This Arabidopsis thaliana (Mouse-ear cress) protein is Glycerophosphodiester phosphodiesterase GDPDL1.